The following is a 525-amino-acid chain: 2,3-bisphosphoglycerate-independent phosphoglycerate mutase 2 (525 aa).

Positions 14 and 64 each coordinate Mn(2+). Residue serine 64 is the Phosphoserine intermediate of the active site. Substrate-binding positions include histidine 125, 155-156 (RD), arginine 187, arginine 193, 274-277 (RADR), and lysine 347. Residues aspartate 414, histidine 418, aspartate 455, histidine 456, and histidine 474 each contribute to the Mn(2+) site.

The protein belongs to the BPG-independent phosphoglycerate mutase family. Mn(2+) serves as cofactor.

It carries out the reaction (2R)-2-phosphoglycerate = (2R)-3-phosphoglycerate. It functions in the pathway carbohydrate degradation; glycolysis; pyruvate from D-glyceraldehyde 3-phosphate: step 3/5. Functionally, catalyzes the interconversion of 2-phosphoglycerate and 3-phosphoglycerate. This Methanosarcina barkeri (strain Fusaro / DSM 804) protein is 2,3-bisphosphoglycerate-independent phosphoglycerate mutase 2.